Here is a 1147-residue protein sequence, read N- to C-terminus: ATP-dependent helicase/deoxyribonuclease subunit B (1147 aa).

8–15 contacts ATP; sequence GRAGSGKS. [4Fe-4S] cluster contacts are provided by Cys786, Cys1106, Cys1109, and Cys1115.

This sequence belongs to the helicase family. AddB/RexB type 1 subfamily. In terms of assembly, heterodimer of AddA and AddB. Mg(2+) serves as cofactor. [4Fe-4S] cluster is required as a cofactor.

Its function is as follows. The heterodimer acts as both an ATP-dependent DNA helicase and an ATP-dependent, dual-direction single-stranded exonuclease. Recognizes the chi site generating a DNA molecule suitable for the initiation of homologous recombination. The AddB subunit has 5' -&gt; 3' nuclease activity but not helicase activity. This Clostridium botulinum (strain Loch Maree / Type A3) protein is ATP-dependent helicase/deoxyribonuclease subunit B.